We begin with the raw amino-acid sequence, 119 residues long: MRNITTTTRKMLLLVITILLGIAYHGEAIACPQVNMYLAQCLPYLKAGGNPSPMCCNGLNSLKAAAPEKADRQVACNCLKSVANTIPGINDDFAKQLPAKCGVNIGVPFSKTVDCNSIN.

Residues 1-28 (MRNITTTTRKMLLLVITILLGIAYHGEA) form the signal peptide. Intrachain disulfides connect Cys31/Cys78, Cys41/Cys55, Cys56/Cys101, and Cys76/Cys115.

The protein belongs to the plant LTP family.

Plant non-specific lipid-transfer proteins transfer phospholipids as well as galactolipids across membranes. May play a role in wax or cutin deposition in the cell walls of expanding epidermal cells and certain secretory tissues. This Arabidopsis thaliana (Mouse-ear cress) protein is Non-specific lipid-transfer protein 11 (LTP11).